Consider the following 254-residue polypeptide: MLKIADVEFESRLFTGTGKFSNSQVMLEAIRASKSQLVTVAMKRIDFKIGLDDLLTPLRQVGVQLLPNTSGARNAKEAVFAAELAREMLGTRWIKLEIHPDPKYLMPDAIETLEAARILCEKGFIVLPYVHADPVLCRRLEEVGCAAVMPLASPIGSNQGLVTESFLKIIIEQARVPVVIDAGIGAPSQAARAMELGADAVLVNTAIASSASPIVMAECFKEAVQCGRRAFEAGLGRVQTGAVQTSPLTGFLNQ.

Residue Lys95 is the Schiff-base intermediate with DXP of the active site. 1-deoxy-D-xylulose 5-phosphate contacts are provided by residues Gly156, 182 to 183 (AG), and 204 to 205 (NT).

Belongs to the ThiG family. As to quaternary structure, homotetramer. Forms heterodimers with either ThiH or ThiS.

The protein resides in the cytoplasm. It catalyses the reaction [ThiS sulfur-carrier protein]-C-terminal-Gly-aminoethanethioate + 2-iminoacetate + 1-deoxy-D-xylulose 5-phosphate = [ThiS sulfur-carrier protein]-C-terminal Gly-Gly + 2-[(2R,5Z)-2-carboxy-4-methylthiazol-5(2H)-ylidene]ethyl phosphate + 2 H2O + H(+). It functions in the pathway cofactor biosynthesis; thiamine diphosphate biosynthesis. Its function is as follows. Catalyzes the rearrangement of 1-deoxy-D-xylulose 5-phosphate (DXP) to produce the thiazole phosphate moiety of thiamine. Sulfur is provided by the thiocarboxylate moiety of the carrier protein ThiS. In vitro, sulfur can be provided by H(2)S. The chain is Thiazole synthase from Shewanella sp. (strain W3-18-1).